The primary structure comprises 477 residues: Cytochrome c oxidase subunit 1 (477 aa).

A helical transmembrane segment spans residues 16 to 36 (VGTMYLMLGMWSGFGGLNLSW). Ca(2+) contacts are provided by E41 and G46. Residue H62 participates in Fe(II)-heme a binding. The next 6 helical transmembrane spans lie at 64-84 (IMMI…NWLL), 101-121 (FSFW…FIDY), 149-171 (ILGL…VTFL), 185-205 (LFVW…PVLA), 236-256 (LFWF…FGLV), and 269-289 (VFGS…GFIV). Position 242 (H242) interacts with Cu cation. The segment at residues 242 to 246 (HPEVY) is a cross-link (1'-histidyl-3'-tyrosine (His-Tyr)). Residue Y246 participates in O2 binding. Cu cation-binding residues include H292 and H293. Helical transmembrane passes span 309 to 329 (AVTM…IATI) and 340 to 360 (TLWV…GVIL). Mg(2+) is bound by residues H370 and D371. A heme a3-binding site is contributed by H378. H380 provides a ligand contact to Fe(II)-heme a. Helical transmembrane passes span 382–402 (VLSM…FPFF) and 416–436 (FFLT…LGLG). Residue P443 participates in Ca(2+) binding. The helical transmembrane segment at 455-475 (WSTIGCAMVMVSVSLFIHMQW) threads the bilayer.

The protein belongs to the heme-copper respiratory oxidase family. In terms of assembly, component of the cytochrome c oxidase (complex IV, CIV), a multisubunit enzyme composed of a catalytic core of 3 subunits and several supernumerary subunits. The complex exists as a monomer or a dimer and forms supercomplexes (SCs) in the inner mitochondrial membrane with ubiquinol-cytochrome c oxidoreductase (cytochrome b-c1 complex, complex III, CIII). Heme is required as a cofactor. It depends on Cu cation as a cofactor.

The protein resides in the mitochondrion inner membrane. It catalyses the reaction 4 Fe(II)-[cytochrome c] + O2 + 8 H(+)(in) = 4 Fe(III)-[cytochrome c] + 2 H2O + 4 H(+)(out). Its pathway is energy metabolism; oxidative phosphorylation. Component of the cytochrome c oxidase, the last enzyme in the mitochondrial electron transport chain which drives oxidative phosphorylation. The respiratory chain contains 3 multisubunit complexes succinate dehydrogenase (complex II, CII), ubiquinol-cytochrome c oxidoreductase (cytochrome b-c1 complex, complex III, CIII) and cytochrome c oxidase (complex IV, CIV), that cooperate to transfer electrons derived from NADH and succinate to molecular oxygen, creating an electrochemical gradient over the inner membrane that drives transmembrane transport and the ATP synthase. Cytochrome c oxidase is the component of the respiratory chain that catalyzes the reduction of oxygen to water. Electrons originating from reduced cytochrome c in the intermembrane space (IMS) are transferred via the dinuclear copper A center (CU(A)) of subunit 2 and heme A of subunit 1 to the active site in subunit 1, a binuclear center (BNC) formed by heme A3 and copper B (CU(B)). The BNC reduces molecular oxygen to 2 water molecules using 4 electrons from cytochrome c in the IMS and 4 protons from the mitochondrial matrix. This is Cytochrome c oxidase subunit 1 (COI) from Pecten maximus (King scallop).